A 436-amino-acid polypeptide reads, in one-letter code: 3-ketoacyl-CoA thiolase (436 aa).

Cysteine 99 serves as the catalytic Acyl-thioester intermediate. Active-site proton acceptor residues include histidine 392 and cysteine 422.

The protein belongs to the thiolase-like superfamily. Thiolase family. In terms of assembly, heterotetramer of two alpha chains (FadJ) and two beta chains (FadI).

It localises to the cytoplasm. It catalyses the reaction an acyl-CoA + acetyl-CoA = a 3-oxoacyl-CoA + CoA. It participates in lipid metabolism; fatty acid beta-oxidation. Catalyzes the final step of fatty acid oxidation in which acetyl-CoA is released and the CoA ester of a fatty acid two carbons shorter is formed. This Escherichia fergusonii (strain ATCC 35469 / DSM 13698 / CCUG 18766 / IAM 14443 / JCM 21226 / LMG 7866 / NBRC 102419 / NCTC 12128 / CDC 0568-73) protein is 3-ketoacyl-CoA thiolase.